Here is a 122-residue protein sequence, read N- to C-terminus: Acidic phospholipase A2 homolog vipoxin A chain (122 aa).

Intrachain disulfides connect Cys26–Cys115, Cys28–Cys44, Cys43–Cys95, Cys49–Cys122, Cys50–Cys88, Cys57–Cys81, and Cys75–Cys86.

It belongs to the phospholipase A2 family. Group II subfamily. D49 sub-subfamily. As to quaternary structure, heterodimer of A and B (AC P14420) chains; non-covalently linked. The A chain (acidic) is non-toxic, and increases the toxicity of the B chain (basic). The A chain may act as factor stabilizing the complex structure and hence retaining its toxicity by preventing non-specific binding. Upon binding to the target membranes the A chain may dissociate. As to expression, expressed by the venom gland.

Its subcellular location is the secreted. Functionally, heterodimer: postsynaptic neurotoxin. In terms of biological role, monomer: Acidic phospholipase A2 homolog that is non-toxic. This chain is Acidic phospholipase A2 homolog vipoxin A chain, found in Vipera ammodytes meridionalis (Eastern sand viper).